The following is an 806-amino-acid chain: Leucine--tRNA ligase (806 aa).

Positions 40-51 (PYPSGQGLHVGH) match the 'HIGH' region motif. Residues 578 to 582 (KMSKS) carry the 'KMSKS' region motif. Residue Lys-581 coordinates ATP.

It belongs to the class-I aminoacyl-tRNA synthetase family.

The protein resides in the cytoplasm. It catalyses the reaction tRNA(Leu) + L-leucine + ATP = L-leucyl-tRNA(Leu) + AMP + diphosphate. In Limosilactobacillus reuteri (strain DSM 20016) (Lactobacillus reuteri), this protein is Leucine--tRNA ligase.